A 248-amino-acid chain; its full sequence is Triosephosphate isomerase (248 aa).

9-11 (NWK) lines the substrate pocket. Catalysis depends on H94, which acts as the Electrophile. The Proton acceptor role is filled by E166. Residues G172, S212, and 233 to 234 (GG) contribute to the substrate site.

The protein belongs to the triosephosphate isomerase family. As to quaternary structure, homodimer.

It localises to the cytoplasm. It catalyses the reaction D-glyceraldehyde 3-phosphate = dihydroxyacetone phosphate. It functions in the pathway carbohydrate biosynthesis; gluconeogenesis. It participates in carbohydrate degradation; glycolysis; D-glyceraldehyde 3-phosphate from glycerone phosphate: step 1/1. Functionally, involved in the gluconeogenesis. Catalyzes stereospecifically the conversion of dihydroxyacetone phosphate (DHAP) to D-glyceraldehyde-3-phosphate (G3P). This is Triosephosphate isomerase from Clostridium beijerinckii (strain ATCC 51743 / NCIMB 8052) (Clostridium acetobutylicum).